Consider the following 410-residue polypeptide: Ribose 1,5-bisphosphate phosphokinase PhnN (410 aa).

A unknown region spans residues 1–220 (MRYAVYLAPP…VWLLMAGSTS (220 aa)). The ribose 1,5-bisphosphokinase stretch occupies residues 221-410 (MRTETGQLIY…SHCHQPITAL (190 aa)). Residue 233–240 (GPSGAGKD) participates in ATP binding.

In the C-terminal section; belongs to the ribose 1,5-bisphosphokinase family.

It carries out the reaction alpha-D-ribose 1,5-bisphosphate + ATP = 5-phospho-alpha-D-ribose 1-diphosphate + ADP. Its pathway is metabolic intermediate biosynthesis; 5-phospho-alpha-D-ribose 1-diphosphate biosynthesis; 5-phospho-alpha-D-ribose 1-diphosphate from D-ribose 5-phosphate (route II): step 3/3. Its function is as follows. Catalyzes the phosphorylation of ribose 1,5-bisphosphate to 5-phospho-D-ribosyl alpha-1-diphosphate (PRPP). The sequence is that of Ribose 1,5-bisphosphate phosphokinase PhnN (phnN) from Laribacter hongkongensis (strain HLHK9).